We begin with the raw amino-acid sequence, 194 residues long: Surfactant protein C (194 aa).

The segment at 1 to 21 is disordered; that stretch reads MDMGSKEVLMESPPDYSTGPR. Residues 1-23 constitute a propeptide that is removed on maturation; the sequence is MDMGSKEVLMESPPDYSTGPRSQ. 2 S-palmitoyl cysteine lipidation sites follow: cysteine 28 and cysteine 29. Residues 59–194 constitute a propeptide that is removed on maturation; sequence HMSQKHTEMV…LCGELPLYYI (136 aa). Positions 95–194 constitute a BRICHOS domain; the sequence is FSIGSTGIVL…LCGELPLYYI (100 aa). Cysteine 122 and cysteine 186 are oxidised to a cystine. The segment at 149 to 170 is disordered; it reads SSTPTSKLGQEEGHSAGSDSDS.

The protein resides in the secreted. The protein localises to the extracellular space. Its subcellular location is the surface film. Functionally, pulmonary surfactant associated proteins promote alveolar stability by lowering the surface tension at the air-liquid interface in the peripheral air spaces. The chain is Surfactant protein C from Rattus norvegicus (Rat).